A 434-amino-acid polypeptide reads, in one-letter code: Purple acid phosphatase 22 (434 aa).

An N-terminal signal peptide occupies residues 1–22 (MKLFGLFLSFTLLFLCPFISQA). N-linked (GlcNAc...) asparagine glycosylation is present at Asn-116. 3 residues coordinate Fe cation: Asp-148, Asp-175, and Tyr-178. Zn(2+) is bound at residue Asp-175. Zn(2+) contacts are provided by Asn-208 and His-292. Position 208 (Asn-208) interacts with substrate. The active-site Proton donor is the His-302. Residue His-329 coordinates Zn(2+). 329-331 (HVH) contacts substrate. Position 331 (His-331) interacts with Fe cation. The N-linked (GlcNAc...) asparagine glycan is linked to Asn-403.

Belongs to the metallophosphoesterase superfamily. Purple acid phosphatase family. As to quaternary structure, homodimer. Requires Fe cation as cofactor. It depends on Zn(2+) as a cofactor. Expressed in roots, stems, leaves, flowers and siliques.

It is found in the secreted. It catalyses the reaction a phosphate monoester + H2O = an alcohol + phosphate. The polypeptide is Purple acid phosphatase 22 (PAP22) (Arabidopsis thaliana (Mouse-ear cress)).